The following is an 81-amino-acid chain: Antimicrobial peptide D1 (81 aa).

Residues 1-31 form the signal peptide; that stretch reads MAKTVLGIHVTFLTLLFAVLLLNDVMYTPVE. Intrachain disulfides connect cysteine 34–cysteine 81, cysteine 45–cysteine 66, cysteine 51–cysteine 75, and cysteine 55–cysteine 77.

In terms of biological role, antimicrobial peptide probably active against fungi like B.sorokiniana, F.oxysporum, F.graminearum, F.avenaceum, B.cinerea, P.beta, P.infestans and P.debaryanum. The polypeptide is Antimicrobial peptide D1 (Stellaria media (Common chickweed)).